A 248-amino-acid polypeptide reads, in one-letter code: MNFYRSSIISQIIKYNRRLAKSIICEDDSQIITLTAFVNQCLWCHKRVSVSAILLTTDNKILVCNRRDSFLYSEIIRTRNMFRKKRLFLNYSNYLSKQERSILSSFFSLYPATADNDRIDAIYPGGIPKRGENVPECLSREIKEEVNIDNSFVFIDTRFFIHGIIEDTIINKFFEVIFFVGRISLTSDQIIDTFKSNHEIKDLIFLDPNSGNGLQYEIAKYALDTAKLKCYGHRGCYYESLKKLTEDD.

The Nudix hydrolase domain occupies 45–227 (HKRVSVSAIL…IAKYALDTAK (183 aa)). The Nudix box motif lies at 126 to 147 (GIPKRGENVPECLSREIKEEVN). Glu132 is a binding site for Mg(2+). The active-site Nucleophile is the Glu141. Glu145 is a binding site for Mn(2+). Asp167 lines the Mg(2+) pocket.

The protein belongs to the Nudix hydrolase family. It depends on Mg(2+) as a cofactor. Mn(2+) is required as a cofactor.

It localises to the host mitochondrion. Functionally, decapping enzyme that remove the protective 5'-cap from both host and viral mRNAs to commit transcripts for decay by the cellular exonuclease XRN1. Preferentially targets spliced mRNAs and since all viral genes are intronless, it preferentially targets host over viral transcripts. Acceleration of the turnover of cellular transcripts promotes the shutoff of host protein synthesis and therefore diminish the magnitude of antiviral response. In Vaccinia virus (strain Copenhagen) (VACV), this protein is mRNA-decapping protein OPG122 (OPG122).